We begin with the raw amino-acid sequence, 407 residues long: Phosphoglycerate kinase (407 aa).

Substrate contacts are provided by residues 27–29 (DLN), R43, 66–69 (HLGR), R125, and R165. ATP is bound by residues K215, G303, E334, and 363-366 (GGDS).

The protein belongs to the phosphoglycerate kinase family. In terms of assembly, monomer.

The protein localises to the cytoplasm. It catalyses the reaction (2R)-3-phosphoglycerate + ATP = (2R)-3-phospho-glyceroyl phosphate + ADP. The protein operates within carbohydrate degradation; glycolysis; pyruvate from D-glyceraldehyde 3-phosphate: step 2/5. This Mycobacterium sp. (strain JLS) protein is Phosphoglycerate kinase.